We begin with the raw amino-acid sequence, 63 residues long: Large ribosomal subunit protein bL35 (63 aa).

The tract at residues 26–50 is disordered; sequence GSGMRHNLEHKSARKRRALKRDDVL.

It belongs to the bacterial ribosomal protein bL35 family.

This is Large ribosomal subunit protein bL35 from Bifidobacterium animalis subsp. lactis (strain AD011).